The primary structure comprises 488 residues: uncharacterized protein (488 aa).

I27 to A38 is an NAD(+) binding site.

The protein belongs to the mannitol dehydrogenase family. UxuB subfamily.

This is an uncharacterized protein from Escherichia coli (strain K12).